Reading from the N-terminus, the 255-residue chain is Indole-3-glycerol phosphate synthase (255 aa).

Belongs to the TrpC family.

The enzyme catalyses 1-(2-carboxyphenylamino)-1-deoxy-D-ribulose 5-phosphate + H(+) = (1S,2R)-1-C-(indol-3-yl)glycerol 3-phosphate + CO2 + H2O. Its pathway is amino-acid biosynthesis; L-tryptophan biosynthesis; L-tryptophan from chorismate: step 4/5. This chain is Indole-3-glycerol phosphate synthase, found in Streptococcus pneumoniae serotype 2 (strain D39 / NCTC 7466).